A 508-amino-acid chain; its full sequence is Photosystem II CP47 reaction center protein (508 aa).

6 consecutive transmembrane segments (helical) span residues 21 to 36 (AVHIMHTALVSGWAGS), 101 to 115 (IILSGLLFLAAIWHW), 140 to 156 (GIHLFLSGLLCFGFGAF), 203 to 218 (IAAGILGILAGLFHLS), 237 to 252 (VLSSSIAAVFFAAFIV), and 457 to 472 (CFALLFFFGHIWHGAR).

The protein belongs to the PsbB/PsbC family. PsbB subfamily. In terms of assembly, PSII is composed of 1 copy each of membrane proteins PsbA, PsbB, PsbC, PsbD, PsbE, PsbF, PsbH, PsbI, PsbJ, PsbK, PsbL, PsbM, PsbT, PsbX, PsbY, PsbZ, Psb30/Ycf12, at least 3 peripheral proteins of the oxygen-evolving complex and a large number of cofactors. It forms dimeric complexes. The cofactor is Binds multiple chlorophylls. PSII binds additional chlorophylls, carotenoids and specific lipids..

The protein resides in the plastid. It is found in the chloroplast thylakoid membrane. In terms of biological role, one of the components of the core complex of photosystem II (PSII). It binds chlorophyll and helps catalyze the primary light-induced photochemical processes of PSII. PSII is a light-driven water:plastoquinone oxidoreductase, using light energy to abstract electrons from H(2)O, generating O(2) and a proton gradient subsequently used for ATP formation. This Chara vulgaris (Common stonewort) protein is Photosystem II CP47 reaction center protein.